The primary structure comprises 544 residues: Chaperonin GroEL (544 aa).

Residues 29–32 (TLGP), 86–90 (DGTTT), G413, 476–478 (NAA), and D492 each bind ATP.

This sequence belongs to the chaperonin (HSP60) family. As to quaternary structure, forms a cylinder of 14 subunits composed of two heptameric rings stacked back-to-back. Interacts with the co-chaperonin GroES.

Its subcellular location is the cytoplasm. It carries out the reaction ATP + H2O + a folded polypeptide = ADP + phosphate + an unfolded polypeptide.. Functionally, together with its co-chaperonin GroES, plays an essential role in assisting protein folding. The GroEL-GroES system forms a nano-cage that allows encapsulation of the non-native substrate proteins and provides a physical environment optimized to promote and accelerate protein folding. In Bacillus velezensis (strain DSM 23117 / BGSC 10A6 / LMG 26770 / FZB42) (Bacillus amyloliquefaciens subsp. plantarum), this protein is Chaperonin GroEL.